The chain runs to 467 residues: Asparagine--tRNA ligase (467 aa).

It belongs to the class-II aminoacyl-tRNA synthetase family. In terms of assembly, homodimer.

The protein resides in the cytoplasm. The catalysed reaction is tRNA(Asn) + L-asparagine + ATP = L-asparaginyl-tRNA(Asn) + AMP + diphosphate + H(+). The protein is Asparagine--tRNA ligase of Baumannia cicadellinicola subsp. Homalodisca coagulata.